Reading from the N-terminus, the 117-residue chain is MAKYNEKKEKKRIAKERIDILFSLAERVFPYSPELAKRYVELALLVQQKAKVKIPRKWKRRYCKKCHAFLVPGINARVRLRQKRMPHIVVKCLECGHIMRYPYIKEIKKRRKEKMEY.

Zn(2+) is bound by residues Cys-63, Cys-66, Cys-92, and Cys-95.

The protein belongs to the eukaryotic/archaeal RNase P protein component 4 family. Consists of a catalytic RNA component and at least 4 protein subunits. Forms a subcomplex with Rnp1 which stimulates the catalytic RNA. Zn(2+) serves as cofactor.

Its subcellular location is the cytoplasm. The enzyme catalyses Endonucleolytic cleavage of RNA, removing 5'-extranucleotides from tRNA precursor.. Functionally, part of ribonuclease P, a protein complex that generates mature tRNA molecules by cleaving their 5'-ends. The RNA is catalytic, but its KM for pre-tRNA is 170-fold decreased in the presence of the 4 known protein subunits (Rnp1-4). The protein subunits also decrease the amount of Mg(2+) needed for activity. In Pyrococcus furiosus (strain ATCC 43587 / DSM 3638 / JCM 8422 / Vc1), this protein is Ribonuclease P protein component 4.